The following is a 284-amino-acid chain: 2-dehydro-3-deoxyphosphooctonate aldolase (284 aa).

It belongs to the KdsA family.

It localises to the cytoplasm. It catalyses the reaction D-arabinose 5-phosphate + phosphoenolpyruvate + H2O = 3-deoxy-alpha-D-manno-2-octulosonate-8-phosphate + phosphate. It participates in carbohydrate biosynthesis; 3-deoxy-D-manno-octulosonate biosynthesis; 3-deoxy-D-manno-octulosonate from D-ribulose 5-phosphate: step 2/3. Its pathway is bacterial outer membrane biogenesis; lipopolysaccharide biosynthesis. The sequence is that of 2-dehydro-3-deoxyphosphooctonate aldolase from Shigella boydii serotype 18 (strain CDC 3083-94 / BS512).